The primary structure comprises 290 residues: ATP synthase gamma chain (290 aa).

This sequence belongs to the ATPase gamma chain family. As to quaternary structure, F-type ATPases have 2 components, CF(1) - the catalytic core - and CF(0) - the membrane proton channel. CF(1) has five subunits: alpha(3), beta(3), gamma(1), delta(1), epsilon(1). CF(0) has three main subunits: a, b and c.

It is found in the cell inner membrane. In terms of biological role, produces ATP from ADP in the presence of a proton gradient across the membrane. The gamma chain is believed to be important in regulating ATPase activity and the flow of protons through the CF(0) complex. The protein is ATP synthase gamma chain of Bacteroides fragilis (strain ATCC 25285 / DSM 2151 / CCUG 4856 / JCM 11019 / LMG 10263 / NCTC 9343 / Onslow / VPI 2553 / EN-2).